Reading from the N-terminus, the 271-residue chain is Hydroxyethylthiazole kinase (271 aa).

Met46 is a substrate binding site. Residues Arg122 and Thr169 each contribute to the ATP site. Gly196 serves as a coordination point for substrate.

This sequence belongs to the Thz kinase family. The cofactor is Mg(2+).

It catalyses the reaction 5-(2-hydroxyethyl)-4-methylthiazole + ATP = 4-methyl-5-(2-phosphooxyethyl)-thiazole + ADP + H(+). Its pathway is cofactor biosynthesis; thiamine diphosphate biosynthesis; 4-methyl-5-(2-phosphoethyl)-thiazole from 5-(2-hydroxyethyl)-4-methylthiazole: step 1/1. In terms of biological role, catalyzes the phosphorylation of the hydroxyl group of 4-methyl-5-beta-hydroxyethylthiazole (THZ). The protein is Hydroxyethylthiazole kinase of Alkaliphilus oremlandii (strain OhILAs) (Clostridium oremlandii (strain OhILAs)).